Here is a 452-residue protein sequence, read N- to C-terminus: NADH-quinone oxidoreductase subunit N 2 (452 aa).

Helical transmembrane passes span 6-26 (VLIP…YGFI), 33-53 (TYIL…FNFG), 70-90 (TLRI…YSDL), 97-117 (SVEY…MIVA), 120-140 (LLIL…LAGF), 154-174 (YFIL…FFYA), 194-214 (ILLG…LAPF), 232-252 (FLST…FLSI), 258-278 (IQDL…VLAL), 286-306 (MLAY…LLPE), 311-331 (ISLI…FAFI), 355-375 (FCII…GFIV), 387-407 (GYGS…FYYL), and 432-452 (ALSG…LLIF).

It belongs to the complex I subunit 2 family. In terms of assembly, NDH-1 is composed of 14 different subunits. Subunits NuoA, H, J, K, L, M, N constitute the membrane sector of the complex.

The protein localises to the cell inner membrane. It carries out the reaction a quinone + NADH + 5 H(+)(in) = a quinol + NAD(+) + 4 H(+)(out). Its function is as follows. NDH-1 shuttles electrons from NADH, via FMN and iron-sulfur (Fe-S) centers, to quinones in the respiratory chain. The immediate electron acceptor for the enzyme in this species is believed to be ubiquinone. Couples the redox reaction to proton translocation (for every two electrons transferred, four hydrogen ions are translocated across the cytoplasmic membrane), and thus conserves the redox energy in a proton gradient. This Thermodesulfovibrio yellowstonii (strain ATCC 51303 / DSM 11347 / YP87) protein is NADH-quinone oxidoreductase subunit N 2.